Reading from the N-terminus, the 353-residue chain is Vomeronasal type-1 receptor 1 (353 aa).

The Extracellular portion of the chain corresponds to 1 to 56; it reads MVGDTLKLLSPLMTRYFFLLFYSTDSSDLNENQHPLDFDEMAFGKVKSGISFLIQT. A helical membrane pass occupies residues 57 to 77; that stretch reads GVGILGNSFLLCFYNLILFTG. Residues 78–84 are Cytoplasmic-facing; it reads HKLRPTD. Residues 85–105 traverse the membrane as a helical segment; it reads LILSHLALANSMVLFFKGIPQ. Over 106-132 the chain is Extracellular; the sequence is TMAAFGLKYLLNDTGCKFVFYYHRVGT. The N-linked (GlcNAc...) asparagine glycan is linked to N117. A helical membrane pass occupies residues 133-153; it reads RVSLSTICLLNGFQAIKLNPS. Residues 154–169 are Cytoplasmic-facing; it reads ICRWMEIKIRSPRFID. A helical membrane pass occupies residues 170-190; sequence FCCLLCWVPHVLMNASVLLLV. Over 191 to 226 the chain is Extracellular; the sequence is NGPLNSKNSSAKNNYGYCSYKASKRFSSLHAVLYFS. The N-linked (GlcNAc...) asparagine glycan is linked to N198. Residues 227 to 247 traverse the membrane as a helical segment; it reads PDFMSLGFMVWASGSMVFFLY. The Cytoplasmic portion of the chain corresponds to 248–274; sequence RHKQQVQHNHSNRLSCRPSQETRATRT. The helical transmembrane segment at 275-295 threads the bilayer; the sequence is IMVLVSSFFVFYSVHSFLTIW. The Extracellular portion of the chain corresponds to 296–303; it reads TTVVANPG. Residues 304-324 traverse the membrane as a helical segment; it reads QWIVNNSVLVASYFPSRSPFV. Residues 325 to 353 are Cytoplasmic-facing; the sequence is LIMSDTRISQFCFACRTRKTLFPNLVVMP.

It belongs to the G-protein coupled receptor 1 family.

Its subcellular location is the cell membrane. Its function is as follows. Putative pheromone receptor. In Gorilla gorilla gorilla (Western lowland gorilla), this protein is Vomeronasal type-1 receptor 1 (VN1R1).